Reading from the N-terminus, the 96-residue chain is MPNIKSAKKRVRVSEKRRLRNKAYKTFFKNRIKEVLKAIENKEPKEVVLELTRKAQAAIDKAVSKRVIHKNQGARRKARLFEKVNEYLRTLETTQE.

This sequence belongs to the bacterial ribosomal protein bS20 family.

Binds directly to 16S ribosomal RNA. The chain is Small ribosomal subunit protein bS20 from Thermotoga petrophila (strain ATCC BAA-488 / DSM 13995 / JCM 10881 / RKU-1).